The sequence spans 373 residues: Homoserine O-acetyltransferase (373 aa).

The 310-residue stretch at 46-355 folds into the AB hydrolase-1 domain; sequence NAILICHPLT…NPNGHDSFLL (310 aa). S151 functions as the Nucleophile in the catalytic mechanism. R221 provides a ligand contact to substrate. Catalysis depends on residues D317 and H350. D351 serves as a coordination point for substrate.

It belongs to the AB hydrolase superfamily. MetX family. In terms of assembly, homodimer.

The protein resides in the cytoplasm. It carries out the reaction L-homoserine + acetyl-CoA = O-acetyl-L-homoserine + CoA. It functions in the pathway amino-acid biosynthesis; L-methionine biosynthesis via de novo pathway; O-acetyl-L-homoserine from L-homoserine: step 1/1. Its function is as follows. Transfers an acetyl group from acetyl-CoA to L-homoserine, forming acetyl-L-homoserine. The protein is Homoserine O-acetyltransferase of Zymomonas mobilis subsp. mobilis (strain ATCC 31821 / ZM4 / CP4).